A 187-amino-acid chain; its full sequence is Adenylate kinase (187 aa).

Residue 10-15 (GSGKGT) coordinates ATP. Residues 30–59 (STGDLLRAEVAAGSPLGVKAKEVMARGDLV) form an NMP region. AMP is bound by residues Thr31, Arg36, 57–59 (DLV), 85–88 (GYPR), and Gln92. The LID stretch occupies residues 126–136 (GRAKAEGREDD). Arg127 is a binding site for ATP. 2 residues coordinate AMP: Arg133 and Arg144. Position 172 (Gly172) interacts with ATP.

The protein belongs to the adenylate kinase family. As to quaternary structure, monomer.

Its subcellular location is the cytoplasm. The catalysed reaction is AMP + ATP = 2 ADP. The protein operates within purine metabolism; AMP biosynthesis via salvage pathway; AMP from ADP: step 1/1. Catalyzes the reversible transfer of the terminal phosphate group between ATP and AMP. Plays an important role in cellular energy homeostasis and in adenine nucleotide metabolism. This Xanthomonas campestris pv. campestris (strain B100) protein is Adenylate kinase.